The primary structure comprises 127 residues: uncharacterized protein (127 aa).

Residues 69–94 (GDGGSVPEKGKHGILGAQGQEHPGLN) form a disordered region.

This is an uncharacterized protein from Homo sapiens (Human).